The following is a 61-amino-acid chain: UPF0434 protein PFLU_3771 (61 aa).

This sequence belongs to the UPF0434 family.

The sequence is that of UPF0434 protein PFLU_3771 from Pseudomonas fluorescens (strain SBW25).